The following is a 459-amino-acid chain: Ribulose bisphosphate carboxylase large chain (459 aa).

The propeptide occupies 1 to 2; that stretch reads MS. An N-acetylproline modification is found at Pro3. Position 14 is an N6,N6,N6-trimethyllysine (Lys14). Substrate-binding residues include Asn123 and Thr173. The Proton acceptor role is filled by Lys175. Residue Lys177 coordinates substrate. Residues Lys201, Asp203, and Glu204 each contribute to the Mg(2+) site. Lys201 bears the N6-carboxylysine mark. His294 serves as the catalytic Proton acceptor. Positions 295, 327, and 379 each coordinate substrate.

Belongs to the RuBisCO large chain family. Type I subfamily. Heterohexadecamer of 8 large chains and 8 small chains; disulfide-linked. The disulfide link is formed within the large subunit homodimers. Mg(2+) is required as a cofactor. In terms of processing, the disulfide bond which can form in the large chain dimeric partners within the hexadecamer appears to be associated with oxidative stress and protein turnover.

It is found in the plastid. It localises to the chloroplast. The catalysed reaction is 2 (2R)-3-phosphoglycerate + 2 H(+) = D-ribulose 1,5-bisphosphate + CO2 + H2O. It carries out the reaction D-ribulose 1,5-bisphosphate + O2 = 2-phosphoglycolate + (2R)-3-phosphoglycerate + 2 H(+). Functionally, ruBisCO catalyzes two reactions: the carboxylation of D-ribulose 1,5-bisphosphate, the primary event in carbon dioxide fixation, as well as the oxidative fragmentation of the pentose substrate in the photorespiration process. Both reactions occur simultaneously and in competition at the same active site. The chain is Ribulose bisphosphate carboxylase large chain from Streptopus lanceolatus (Rose twisted stalk).